We begin with the raw amino-acid sequence, 191 residues long: Adenine phosphoribosyltransferase 5 (191 aa).

The protein belongs to the purine/pyrimidine phosphoribosyltransferase family. Homodimer.

It is found in the cytoplasm. The catalysed reaction is AMP + diphosphate = 5-phospho-alpha-D-ribose 1-diphosphate + adenine. Its pathway is purine metabolism; AMP biosynthesis via salvage pathway; AMP from adenine: step 1/1. Functionally, catalyzes a salvage reaction resulting in the formation of AMP, that is energically less costly than de novo synthesis. May contribute to the recycling of adenine into adenylate nucleotides and the inactivation of cytokinins by phosphoribosylation. Possesses low activity toward adenine, but can efficiently convert cytokinins from free bases (active form) to the corresponding nucleotides (inactive form). In Arabidopsis thaliana (Mouse-ear cress), this protein is Adenine phosphoribosyltransferase 5 (APT5).